The following is a 179-amino-acid chain: Large ribosomal subunit protein uL5 (179 aa).

The protein belongs to the universal ribosomal protein uL5 family. Part of the 50S ribosomal subunit; part of the 5S rRNA/L5/L18/L25 subcomplex. Contacts the 5S rRNA and the P site tRNA. Forms a bridge to the 30S subunit in the 70S ribosome.

Functionally, this is one of the proteins that bind and probably mediate the attachment of the 5S RNA into the large ribosomal subunit, where it forms part of the central protuberance. In the 70S ribosome it contacts protein S13 of the 30S subunit (bridge B1b), connecting the 2 subunits; this bridge is implicated in subunit movement. Contacts the P site tRNA; the 5S rRNA and some of its associated proteins might help stabilize positioning of ribosome-bound tRNAs. This Desulfosudis oleivorans (strain DSM 6200 / JCM 39069 / Hxd3) (Desulfococcus oleovorans) protein is Large ribosomal subunit protein uL5.